The primary structure comprises 162 residues: Succinate dehydrogenase assembly factor 2, mitochondrial (162 aa).

The transit peptide at 1–35 directs the protein to the mitochondrion; the sequence is MHNMFPALTKTLSLQGYKIINSQTGSAAWSCGRRW.

Belongs to the SDHAF2 family. As to quaternary structure, interacts with SDH1 within the SDH catalytic dimer.

Its subcellular location is the mitochondrion matrix. Its function is as follows. Plays an essential role in the assembly of succinate dehydrogenase (SDH), an enzyme complex (also referred to as respiratory complex II) that is a component of both the tricarboxylic acid (TCA) cycle and the mitochondrial electron transport chain, and which couples the oxidation of succinate to fumarate with the reduction of ubiquinone (coenzyme Q) to ubiquinol. Required for flavinylation (covalent attachment of FAD) of the flavoprotein subunit SDH1 of the SDH catalytic dimer. It is unclear whether it participates in the chemistry of FAD attachment (enzymatic function) or acts as a chaperone that maintains SDH1 in a conformation that is susceptible to autocatalytic FAD attachment. Does not bind FAD or FADH(2) in vitro. Involved in sporulation. Required for the full activation of the early meiotic inducer IME1. The sequence is that of Succinate dehydrogenase assembly factor 2, mitochondrial from Saccharomyces cerevisiae (strain ATCC 204508 / S288c) (Baker's yeast).